Reading from the N-terminus, the 364-residue chain is Methylthioribose-1-phosphate isomerase (364 aa).

Asp254 acts as the Proton donor in catalysis.

This sequence belongs to the eIF-2B alpha/beta/delta subunits family. MtnA subfamily.

The protein resides in the cytoplasm. It localises to the nucleus. It carries out the reaction 5-(methylsulfanyl)-alpha-D-ribose 1-phosphate = 5-(methylsulfanyl)-D-ribulose 1-phosphate. The protein operates within amino-acid biosynthesis; L-methionine biosynthesis via salvage pathway; L-methionine from S-methyl-5-thio-alpha-D-ribose 1-phosphate: step 1/6. Functionally, catalyzes the interconversion of methylthioribose-1-phosphate (MTR-1-P) into methylthioribulose-1-phosphate (MTRu-1-P). The sequence is that of Methylthioribose-1-phosphate isomerase from Drosophila simulans (Fruit fly).